The sequence spans 473 residues: Ribosomal RNA small subunit methyltransferase F (473 aa).

Residues Ala-124 to Lys-130, Glu-148, Asp-175, and Asp-193 each bind S-adenosyl-L-methionine. The Nucleophile role is filled by Cys-246.

The protein belongs to the class I-like SAM-binding methyltransferase superfamily. RsmB/NOP family.

The protein localises to the cytoplasm. It carries out the reaction cytidine(1407) in 16S rRNA + S-adenosyl-L-methionine = 5-methylcytidine(1407) in 16S rRNA + S-adenosyl-L-homocysteine + H(+). Functionally, specifically methylates the cytosine at position 1407 (m5C1407) of 16S rRNA. The polypeptide is Ribosomal RNA small subunit methyltransferase F (Aliivibrio fischeri (strain ATCC 700601 / ES114) (Vibrio fischeri)).